We begin with the raw amino-acid sequence, 532 residues long: Eukaryotic translation initiation factor 3 subunit D (532 aa).

A disordered region spans residues 108-161; sequence ATVLKTRGGAPRGGSFAGRGGSQRGGRFQNQPGRGPVGGQRGPNPRFGKSKFGW. Gly residues predominate over residues 117–131; that stretch reads APRGGSFAGRGGSQR. Over residues 132 to 141 the composition is skewed to low complexity; that stretch reads GGRFQNQPGR. The segment at 296–310 is RNA gate; that stretch reads PLDFITVDENAADPP.

It belongs to the eIF-3 subunit D family. As to quaternary structure, component of the eukaryotic translation initiation factor 3 (eIF-3) complex.

The protein resides in the cytoplasm. MRNA cap-binding component of the eukaryotic translation initiation factor 3 (eIF-3) complex, which is involved in protein synthesis of a specialized repertoire of mRNAs and, together with other initiation factors, stimulates binding of mRNA and methionyl-tRNAi to the 40S ribosome. The eIF-3 complex specifically targets and initiates translation of a subset of mRNAs involved in cell proliferation. In the eIF-3 complex, eif3d specifically recognizes and binds the 7-methylguanosine cap of a subset of mRNAs. This chain is Eukaryotic translation initiation factor 3 subunit D, found in Yarrowia lipolytica (strain CLIB 122 / E 150) (Yeast).